The primary structure comprises 155 residues: 6,7-dimethyl-8-ribityllumazine synthase (155 aa).

Residues Phe23, 57–59, and 81–83 each bind 5-amino-6-(D-ribitylamino)uracil; these read AFE and AVI. Residue 86-87 coordinates (2S)-2-hydroxy-3-oxobutyl phosphate; the sequence is ST. The active-site Proton donor is the His89. A 5-amino-6-(D-ribitylamino)uracil-binding site is contributed by Phe114. Residue Arg128 coordinates (2S)-2-hydroxy-3-oxobutyl phosphate.

Belongs to the DMRL synthase family.

It catalyses the reaction (2S)-2-hydroxy-3-oxobutyl phosphate + 5-amino-6-(D-ribitylamino)uracil = 6,7-dimethyl-8-(1-D-ribityl)lumazine + phosphate + 2 H2O + H(+). The protein operates within cofactor biosynthesis; riboflavin biosynthesis; riboflavin from 2-hydroxy-3-oxobutyl phosphate and 5-amino-6-(D-ribitylamino)uracil: step 1/2. Its function is as follows. Catalyzes the formation of 6,7-dimethyl-8-ribityllumazine by condensation of 5-amino-6-(D-ribitylamino)uracil with 3,4-dihydroxy-2-butanone 4-phosphate. This is the penultimate step in the biosynthesis of riboflavin. This is 6,7-dimethyl-8-ribityllumazine synthase from Dehalococcoides mccartyi (strain ATCC BAA-2266 / KCTC 15142 / 195) (Dehalococcoides ethenogenes (strain 195)).